Reading from the N-terminus, the 493-residue chain is Phospholipid transfer protein (493 aa).

A signal peptide spans methionine 1 to alanine 17. The N-linked (GlcNAc...) (complex) asparagine glycan is linked to asparagine 64. Residue asparagine 94 is glycosylated (N-linked (GlcNAc...) asparagine). Asparagine 117 carries an N-linked (GlcNAc...) (complex) asparagine glycan. N-linked (GlcNAc...) asparagine glycosylation is present at asparagine 143. Cysteine 146 and cysteine 185 are oxidised to a cystine. The N-linked (GlcNAc...) (complex) asparagine glycan is linked to asparagine 245. N-linked (GlcNAc...) asparagine glycosylation occurs at asparagine 398.

Belongs to the BPI/LBP/Plunc superfamily. BPI/LBP family. Post-translationally, glycosylation is necessary for secretion and its phospholipid transfer activity. As to expression, widely expressed. Highest level of expression in the ovary, thymus and placenta, with moderate levels found in the pancreas, small intestine, testis, lung and prostrate. Low level expression in the kidney, liver and spleen, with very low levels found in the heart, colon, skeletal muscle, leukocytes and brain. Expressed in the cortical neurons.

It localises to the secreted. The protein localises to the nucleus. The catalysed reaction is a 1,2-diacyl-sn-glycero-3-phosphocholine(in) = a 1,2-diacyl-sn-glycero-3-phosphocholine(out). The enzyme catalyses a 1,2-diacyl-sn-glycero-3-phosphoethanolamine(in) = a 1,2-diacyl-sn-glycero-3-phosphoethanolamine(out). It carries out the reaction a 1,2-diacyl-sn-glycerol(in) = a 1,2-diacyl-sn-glycerol(out). It catalyses the reaction a 1,2-diacyl-sn-glycero-3-phosphate(in) = a 1,2-diacyl-sn-glycero-3-phosphate(out). The catalysed reaction is a sphingomyelin(in) = a sphingomyelin(out). The enzyme catalyses a 1,2-diacyl-sn-glycero-3-phospho-(1'-sn-glycerol)(in) = a 1,2-diacyl-sn-glycero-3-phospho-(1'-sn-glycerol)(out). It carries out the reaction a 1,2-diacyl-sn-glycero-3-phospho-(1D-myo-inositol)(in) = a 1,2-diacyl-sn-glycero-3-phospho-(1D-myo-inositol)(out). It catalyses the reaction 1-hexadecanoyl-2-(5Z,8Z,11Z,14Z-eicosatetraenoyl)-sn-glycero-3-phosphoethanolamine(in) = 1-hexadecanoyl-2-(5Z,8Z,11Z,14Z-eicosatetraenoyl)-sn-glycero-3-phosphoethanolamine(out). The catalysed reaction is N-(hexadecanoyl)-sphing-4-enine-1-phosphocholine(in) = N-(hexadecanoyl)-sphing-4-enine-1-phosphocholine(out). The enzyme catalyses 1,2-dihexadecanoyl-sn-glycero-3-phosphocholine(in) = 1,2-dihexadecanoyl-sn-glycero-3-phosphocholine(out). In terms of biological role, mediates the transfer of phospholipids and free cholesterol from triglyceride-rich lipoproteins (low density lipoproteins or LDL and very low density lipoproteins or VLDL) into high-density lipoproteins (HDL) as well as the exchange of phospholipids between triglyceride-rich lipoproteins themselves. Facilitates the transfer of a spectrum of different lipid molecules, including diacylglycerol, phosphatidic acid, sphingomyelin, phosphatidylcholine, phosphatidylinositol, phosphatidylglycerol, cerebroside and phosphatidyl ethanolamine. Plays an important role in HDL remodeling which involves modulating the size and composition of HDL. Also plays a key role in the uptake of cholesterol from peripheral cells and tissues that is subsequently transported to the liver for degradation and excretion. Two distinct forms of PLTP exist in plasma: an active form that can transfer phosphatidylcholine from phospholipid vesicles to HDL, and an inactive form that lacks this capability. The chain is Phospholipid transfer protein (PLTP) from Homo sapiens (Human).